The chain runs to 538 residues: Mitochondria-eating protein (538 aa).

An interaction with YWHAG/14-3-3 protein gamma region spans residues Met1–Arg273. Residue Ser85 is modified to Phosphoserine. The disordered stretch occupies residues Ser97–Gln137. Positions Thr105–Gln122 are enriched in basic and acidic residues. Coiled coils occupy residues Asp118–Asn187 and Asp219–Arg256. The segment covering Gln123–Gln137 has biased composition (polar residues). A phosphoserine mark is found at Ser156 and Ser159. 2 disordered regions span residues Gln173–Met226 and Lys247–Ser294. Basic and acidic residues predominate over residues Glu181–Gln210. The span at Trp211–Glu224 shows a compositional bias: polar residues. Over residues Arg253–Ser278 the composition is skewed to low complexity. Phosphoserine occurs at positions 287 and 509.

Belongs to the MIEAP family. As to quaternary structure, interacts (via coiled-coil domains) with BNIP3L (via BH3 domain). Interacts (via coiled-coil domains) with BNIP3 (via BH3 domain). In terms of assembly, interacts with YWHAG/14-3-3 protein gamma; a protein that also plays a role in MALM.

Its subcellular location is the cytoplasm. It is found in the cytosol. The protein resides in the mitochondrion outer membrane. It localises to the mitochondrion matrix. Functionally, key regulator of mitochondrial quality that mediates the repairing or degradation of unhealthy mitochondria in response to mitochondrial damage. Mediator of mitochondrial protein catabolic process (also named MALM) by mediating the degradation of damaged proteins inside mitochondria by promoting the accumulation in the mitochondrial matrix of hydrolases that are characteristic of the lysosomal lumen. Also involved in mitochondrion degradation of damaged mitochondria by promoting the formation of vacuole-like structures (named MIV), which engulf and degrade unhealthy mitochondria by accumulating lysosomes. The physical interaction of SPATA18/MIEAP, BNIP3 and BNIP3L/NIX at the mitochondrial outer membrane regulates the opening of a pore in the mitochondrial double membrane in order to mediate the translocation of lysosomal proteins from the cytoplasm to the mitochondrial matrix. Binds cardiolipin. May form molecular condensates (non-membrane-bounded organelles) within mitochondria that compartmentalize and promote cardiolipin metabolism. This chain is Mitochondria-eating protein (SPATA18), found in Homo sapiens (Human).